Here is a 360-residue protein sequence, read N- to C-terminus: D-alanine--D-alanine ligase (360 aa).

The region spanning 149 to 353 (KKLMAAEGLP…YEELLDVLVQ (205 aa)) is the ATP-grasp domain. Residue 176–231 (KNLLGLPVFVKPARGGSSIGISRVTAWEDFNKAVGLARAHDEKVIVESEIVGSEVE) participates in ATP binding. Residues aspartate 308, glutamate 320, and asparagine 322 each contribute to the Mg(2+) site.

The protein belongs to the D-alanine--D-alanine ligase family. Mg(2+) is required as a cofactor. The cofactor is Mn(2+).

It is found in the cytoplasm. It catalyses the reaction 2 D-alanine + ATP = D-alanyl-D-alanine + ADP + phosphate + H(+). It functions in the pathway cell wall biogenesis; peptidoglycan biosynthesis. Cell wall formation. In Corynebacterium glutamicum (strain R), this protein is D-alanine--D-alanine ligase.